A 264-amino-acid chain; its full sequence is Thiazole synthase (264 aa).

The active-site Schiff-base intermediate with DXP is the lysine 104. Residues glycine 165, 191-192, and 213-214 each bind 1-deoxy-D-xylulose 5-phosphate; these read AG and NT.

The protein belongs to the ThiG family. In terms of assembly, homotetramer. Forms heterodimers with either ThiH or ThiS.

It localises to the cytoplasm. It carries out the reaction [ThiS sulfur-carrier protein]-C-terminal-Gly-aminoethanethioate + 2-iminoacetate + 1-deoxy-D-xylulose 5-phosphate = [ThiS sulfur-carrier protein]-C-terminal Gly-Gly + 2-[(2R,5Z)-2-carboxy-4-methylthiazol-5(2H)-ylidene]ethyl phosphate + 2 H2O + H(+). The protein operates within cofactor biosynthesis; thiamine diphosphate biosynthesis. Catalyzes the rearrangement of 1-deoxy-D-xylulose 5-phosphate (DXP) to produce the thiazole phosphate moiety of thiamine. Sulfur is provided by the thiocarboxylate moiety of the carrier protein ThiS. In vitro, sulfur can be provided by H(2)S. The polypeptide is Thiazole synthase (Oleidesulfovibrio alaskensis (strain ATCC BAA-1058 / DSM 17464 / G20) (Desulfovibrio alaskensis)).